Here is a 227-residue protein sequence, read N- to C-terminus: Lipoprotein-releasing system ATP-binding protein LolD (227 aa).

The ABC transporter domain occupies 6–227 (LTSQKLYKSY…LHEGSLYARE (222 aa)). Residue 42–49 (GPSGSGKS) coordinates ATP.

Belongs to the ABC transporter superfamily. Lipoprotein translocase (TC 3.A.1.125) family. As to quaternary structure, the complex is composed of two ATP-binding proteins (LolD) and two transmembrane proteins (LolC and LolE).

The protein resides in the cell inner membrane. Functionally, part of the ABC transporter complex LolCDE involved in the translocation of mature outer membrane-directed lipoproteins, from the inner membrane to the periplasmic chaperone, LolA. Responsible for the formation of the LolA-lipoprotein complex in an ATP-dependent manner. In Legionella pneumophila (strain Lens), this protein is Lipoprotein-releasing system ATP-binding protein LolD.